Consider the following 275-residue polypeptide: tRNA pseudouridine synthase A (275 aa).

The active-site Nucleophile is D56. Position 109 (Y109) interacts with substrate.

Belongs to the tRNA pseudouridine synthase TruA family.

The enzyme catalyses uridine(38/39/40) in tRNA = pseudouridine(38/39/40) in tRNA. Functionally, formation of pseudouridine at positions 38, 39 and 40 in the anticodon stem and loop of transfer RNAs. This Methanothermobacter thermautotrophicus (strain ATCC 29096 / DSM 1053 / JCM 10044 / NBRC 100330 / Delta H) (Methanobacterium thermoautotrophicum) protein is tRNA pseudouridine synthase A.